Consider the following 518-residue polypeptide: 12S seed storage globulin 2 (518 aa).

Positions 1-24 are cleaved as a signal peptide; the sequence is MATTRFPSLLFYSYIFLLCNGSMA. Cystine bridges form between Cys45/Cys78 and Cys121/Cys324. The Cupin type-1 1 domain maps to 50-240; that stretch reads LQAFEPLRQV…ALGISQQVAQ (191 aa). The disordered stretch occupies residues 280–311; sequence IQSQEEQSTQYQVGQSPQYQEGQSTQYQPGQS. Residues 330 to 479 enclose the Cupin type-1 2 domain; that stretch reads QNIENPKRAD…AYRISRQEAQ (150 aa). The segment at 482–518 is disordered; the sequence is KNNRGEEFDAFTPKFTQTGSQSYQDEGESSSTEKASE. The span at 495-518 shows a compositional bias: polar residues; the sequence is KFTQTGSQSYQDEGESSSTEKASE.

It belongs to the 11S seed storage protein (globulins) family. As to quaternary structure, hexamer; each subunit is composed of an acidic and a basic chain derived from a single precursor and linked by a disulfide bond.

In terms of biological role, this is a seed storage protein. In Avena sativa (Oat), this protein is 12S seed storage globulin 2.